We begin with the raw amino-acid sequence, 383 residues long: Fructose-1,6-bisphosphate aldolase/phosphatase (383 aa).

Asp-11 acts as the Proton acceptor; for FBP phosphatase activity in catalysis. Mg(2+)-binding residues include Asp-11, His-18, Asp-52, and Asp-53. Position 18 (His-18) interacts with beta-D-fructose 1,6-bisphosphate. His-18 is a binding site for dihydroxyacetone phosphate. Beta-D-fructose 1,6-bisphosphate is bound at residue Tyr-90. Gln-94 contacts Mg(2+). Gly-103–Asn-104 provides a ligand contact to beta-D-fructose 1,6-bisphosphate. Residue Asp-131 coordinates Mg(2+). Lys-132 serves as a coordination point for beta-D-fructose 1,6-bisphosphate. Lys-132 is a binding site for dihydroxyacetone phosphate. Residue Tyr-228 is the Proton donor/acceptor; for FBP aldolase activity of the active site. Mg(2+)-binding residues include Lys-231, Asp-232, and Asp-233. Lys-231 functions as the Schiff-base intermediate with DHAP; for FBP aldolase activity in the catalytic mechanism. Beta-D-fructose 1,6-bisphosphate-binding positions include Gln-241–His-242, Arg-265, Asp-286, and Tyr-347. 2 residues coordinate dihydroxyacetone phosphate: Arg-265 and Asp-286. Residues Phe-361–Asp-383 are disordered. Residues Val-374–Asp-383 are compositionally biased toward polar residues.

Belongs to the FBP aldolase/phosphatase family. In terms of assembly, homooctamer; dimer of tetramers. Mg(2+) serves as cofactor.

The catalysed reaction is beta-D-fructose 1,6-bisphosphate + H2O = beta-D-fructose 6-phosphate + phosphate. It catalyses the reaction beta-D-fructose 1,6-bisphosphate = D-glyceraldehyde 3-phosphate + dihydroxyacetone phosphate. It participates in carbohydrate biosynthesis; gluconeogenesis. In terms of biological role, catalyzes two subsequent steps in gluconeogenesis: the aldol condensation of dihydroxyacetone phosphate (DHAP) and glyceraldehyde-3-phosphate (GA3P) to fructose-1,6-bisphosphate (FBP), and the dephosphorylation of FBP to fructose-6-phosphate (F6P). This Metallosphaera sedula (strain ATCC 51363 / DSM 5348 / JCM 9185 / NBRC 15509 / TH2) protein is Fructose-1,6-bisphosphate aldolase/phosphatase.